The primary structure comprises 569 residues: Dihydroorotate dehydrogenase (quinone), mitochondrial (569 aa).

The N-terminal 23 residues, Met1–Lys23, are a transit peptide targeting the mitochondrion. Residues Ile143–Pro163 traverse the membrane as a helical segment. Residues Ala225–Lys229 and Thr249 each bind FMN. Lys229 contributes to the substrate binding site. Residues Asn274 to Phe278 and Asn342 contribute to the substrate site. Asn342 provides a ligand contact to FMN. The active-site Nucleophile is Ser345. Residue Asn347 coordinates substrate. Residue Lys429 coordinates FMN. Asn458–Thr459 lines the substrate pocket. FMN contacts are provided by residues Ser477–Gly478, Ser505–Gly507, and Tyr528–Ser529.

The protein belongs to the dihydroorotate dehydrogenase family. Type 2 subfamily. As to quaternary structure, monomer. It depends on FMN as a cofactor.

It localises to the mitochondrion inner membrane. The catalysed reaction is (S)-dihydroorotate + a quinone = orotate + a quinol. It participates in pyrimidine metabolism; UMP biosynthesis via de novo pathway; orotate from (S)-dihydroorotate (quinone route): step 1/1. Functionally, catalyzes the conversion of dihydroorotate to orotate with quinone as electron acceptor. This chain is Dihydroorotate dehydrogenase (quinone), mitochondrial, found in Plasmodium falciparum (isolate 3D7).